An 866-amino-acid polypeptide reads, in one-letter code: Probable beta-glucosidase F (866 aa).

Positions 1–20 (MAAFPAYLALLSYLVPGALS) are cleaved as a signal peptide. Asparagine 65, asparagine 73, and asparagine 257 each carry an N-linked (GlcNAc...) asparagine glycan. Aspartate 285 is a catalytic residue. N-linked (GlcNAc...) asparagine glycans are attached at residues asparagine 328, asparagine 360, asparagine 395, asparagine 421, asparagine 474, asparagine 659, asparagine 664, and asparagine 724. A disordered region spans residues 725–748 (SSKTYPYPDGYTTEPKPAPRAGGA).

The protein belongs to the glycosyl hydrolase 3 family.

Its subcellular location is the secreted. The catalysed reaction is Hydrolysis of terminal, non-reducing beta-D-glucosyl residues with release of beta-D-glucose.. It functions in the pathway glycan metabolism; cellulose degradation. Beta-glucosidases are one of a number of cellulolytic enzymes involved in the degradation of cellulosic biomass. Catalyzes the last step releasing glucose from the inhibitory cellobiose. The polypeptide is Probable beta-glucosidase F (bglF) (Aspergillus oryzae (strain ATCC 42149 / RIB 40) (Yellow koji mold)).